Consider the following 229-residue polypeptide: Ribonuclease HII (229 aa).

The RNase H type-2 domain occupies W34 to T223. A divalent metal cation is bound by residues D40, E41, and D131. Positions M209–E229 are disordered.

This sequence belongs to the RNase HII family. Requires Mn(2+) as cofactor. The cofactor is Mg(2+).

The protein localises to the cytoplasm. The enzyme catalyses Endonucleolytic cleavage to 5'-phosphomonoester.. In terms of biological role, endonuclease that specifically degrades the RNA of RNA-DNA hybrids. The protein is Ribonuclease HII of Rhizobium johnstonii (strain DSM 114642 / LMG 32736 / 3841) (Rhizobium leguminosarum bv. viciae).